Reading from the N-terminus, the 612-residue chain is Dihydroxy-acid dehydratase (612 aa).

Aspartate 81 contacts Mg(2+). Residue cysteine 122 participates in [2Fe-2S] cluster binding. 2 residues coordinate Mg(2+): aspartate 123 and lysine 124. Lysine 124 is modified (N6-carboxylysine). A [2Fe-2S] cluster-binding site is contributed by cysteine 195. Glutamate 491 lines the Mg(2+) pocket. Serine 517 (proton acceptor) is an active-site residue.

It belongs to the IlvD/Edd family. In terms of assembly, homodimer. It depends on [2Fe-2S] cluster as a cofactor. The cofactor is Mg(2+).

The enzyme catalyses (2R)-2,3-dihydroxy-3-methylbutanoate = 3-methyl-2-oxobutanoate + H2O. It catalyses the reaction (2R,3R)-2,3-dihydroxy-3-methylpentanoate = (S)-3-methyl-2-oxopentanoate + H2O. It participates in amino-acid biosynthesis; L-isoleucine biosynthesis; L-isoleucine from 2-oxobutanoate: step 3/4. The protein operates within amino-acid biosynthesis; L-valine biosynthesis; L-valine from pyruvate: step 3/4. Functionally, functions in the biosynthesis of branched-chain amino acids. Catalyzes the dehydration of (2R,3R)-2,3-dihydroxy-3-methylpentanoate (2,3-dihydroxy-3-methylvalerate) into 2-oxo-3-methylpentanoate (2-oxo-3-methylvalerate) and of (2R)-2,3-dihydroxy-3-methylbutanoate (2,3-dihydroxyisovalerate) into 2-oxo-3-methylbutanoate (2-oxoisovalerate), the penultimate precursor to L-isoleucine and L-valine, respectively. In Rhizobium meliloti (strain 1021) (Ensifer meliloti), this protein is Dihydroxy-acid dehydratase.